Here is a 771-residue protein sequence, read N- to C-terminus: Transducin-like enhancer protein 3-B (771 aa).

Residues 1-141 (MYPQGRHPAP…PLTQQQLQAQ (141 aa)) form a q domain region. A compositionally biased stretch (low complexity) spans 137 to 148 (QLQAQHLSHAAH). Disordered regions lie at residues 137–174 (QLQA…GSGS) and 196–360 (HHDL…MEAL). A GP domain region spans residues 142-209 (HLSHAAHGPP…EHRERESSTN (68 aa)). A compositionally biased stretch (basic and acidic residues) spans 196 to 206 (HHDLEHRERES). Positions 207 to 217 (STNNSVSPSDS) are enriched in low complexity. The interval 210 to 278 (NSVSPSDSLR…TPRVSPSHSP (69 aa)) is ccN domain. 2 stretches are compositionally biased toward basic and acidic residues: residues 219–257 (RASE…KSDD) and 282–293 (GLDKARALKKDA). The Nuclear localization signal motif lies at 235–238 (KKRR). The tract at residues 279-451 (PENGLDKARA…GGKPAYSFHV (173 aa)) is SP domain. A compositionally biased stretch (low complexity) spans 294–309 (PNSPASVASSGSTPSS). Ser296 and Ser299 each carry phosphoserine. The segment covering 310 to 319 (KAKDHPHNDK) has biased composition (basic and acidic residues). Over residues 320–332 (SSTPGLKSNTPTP) the composition is skewed to polar residues. WD repeat units lie at residues 483–521 (SHGE…SKSP), 529–568 (NRDN…PRIK), 573–612 (SSAP…LVRQ), 615–654 (GHTD…QLQQ), 656–695 (DFTS…KYQL), 697–736 (LHES…SIFQ), and 738–771 (KESS…EVIY).

The protein belongs to the WD repeat Groucho/TLE family. At gastrulation, expression is absent within the axial mesoderm. After gastrulation is complete, expressed in the presomitic mesoderm, but expression in the tailbud doesn't begin until the six to seven somite stage, after which it becomes abundant. Expression is abundant throughout somitogenesis within the posterior half of the somites, but is absent from older somites. Also expressed in a dynamic manner within the neural plate.

It localises to the nucleus. In terms of biological role, transcriptional corepressor that binds to a number of transcription factors. Inhibits the transcriptional activation mediated by CTNNB1 and TCF family members in Wnt signaling. The effects of full-length TLE family members may be modulated by association with dominant-negative AES. This chain is Transducin-like enhancer protein 3-B, found in Danio rerio (Zebrafish).